Here is a 451-residue protein sequence, read N- to C-terminus: BAHD acyltransferase At3g29680 (451 aa).

Active-site proton acceptor residues include histidine 161 and aspartate 393.

This sequence belongs to the plant acyltransferase family.

This is BAHD acyltransferase At3g29680 from Arabidopsis thaliana (Mouse-ear cress).